Consider the following 150-residue polypeptide: Endoribonuclease YbeY (150 aa).

Zn(2+) is bound by residues H115, H119, and H125.

It belongs to the endoribonuclease YbeY family. Zn(2+) serves as cofactor.

It is found in the cytoplasm. Functionally, single strand-specific metallo-endoribonuclease involved in late-stage 70S ribosome quality control and in maturation of the 3' terminus of the 16S rRNA. The chain is Endoribonuclease YbeY from Aquifex aeolicus (strain VF5).